The following is a 402-amino-acid chain: Endoglucanase 1 (402 aa).

The residue at position 1 (Gln-1) is a Pyrrolidone carboxylic acid. Cystine bridges form between Cys-18–Cys-24, Cys-51–Cys-73, and Cys-63–Cys-69. Asn-89 is a glycosylation site (N-linked (GlcNAc...) asparagine). 6 cysteine pairs are disulfide-bonded: Cys-140/Cys-365, Cys-172/Cys-195, Cys-176/Cys-194, Cys-215/Cys-234, Cys-223/Cys-228, and Cys-239/Cys-315. Glu-197 (nucleophile) is an active-site residue. Residue Glu-202 is the Proton donor of the active site. Asn-247 is a glycosylation site (N-linked (GlcNAc...) asparagine).

It belongs to the glycosyl hydrolase 7 (cellulase C) family. As to quaternary structure, monomer.

The protein localises to the secreted. The catalysed reaction is Endohydrolysis of (1-&gt;4)-beta-D-glucosidic linkages in cellulose, lichenin and cereal beta-D-glucans.. Its function is as follows. The biological conversion of cellulose to glucose generally requires three types of hydrolytic enzymes: (1) Endoglucanases which cut internal beta-1,4-glucosidic bonds; (2) Exocellobiohydrolases that cut the disaccharide cellobiose from the non-reducing end of the cellulose polymer chain; (3) Beta-1,4-glucosidases which hydrolyze the cellobiose and other short cello-oligosaccharides to glucose. In Humicola insolens (Soft-rot fungus), this protein is Endoglucanase 1 (CEL7B).